The chain runs to 554 residues: 3-(3-hydroxy-phenyl)propionate/3-hydroxycinnamic acid hydroxylase (554 aa).

FAD is bound by residues 17 to 46 (QVAIAGAGPVGLMMANYLGQMGIDVLVVEK) and 285 to 295 (FRIDRVLLAGD).

It belongs to the PheA/TfdB FAD monooxygenase family. The cofactor is FAD.

The enzyme catalyses 3-(3-hydroxyphenyl)propanoate + NADH + O2 + H(+) = 3-(2,3-dihydroxyphenyl)propanoate + NAD(+) + H2O. It carries out the reaction (2E)-3-(3-hydroxyphenyl)prop-2-enoate + NADH + O2 + H(+) = (2E)-3-(2,3-dihydroxyphenyl)prop-2-enoate + NAD(+) + H2O. Its pathway is aromatic compound metabolism; 3-phenylpropanoate degradation. Its function is as follows. Catalyzes the insertion of one atom of molecular oxygen into position 2 of the phenyl ring of 3-(3-hydroxyphenyl)propionate (3-HPP) and hydroxycinnamic acid (3HCI). The chain is 3-(3-hydroxy-phenyl)propionate/3-hydroxycinnamic acid hydroxylase from Escherichia coli (strain K12 / DH10B).